The primary structure comprises 106 residues: Tripartite terminase subunit 2 (106 aa).

It belongs to the herpesviridae TRM2 protein family. Associates with TRM1 and TRM3 to form the tripartite terminase complex.

It localises to the host nucleus. Its function is as follows. Component of the molecular motor that translocates viral genomic DNA in empty capsid during DNA packaging. Forms a tripartite terminase complex together with TRM1 and TRM3 in the host cytoplasm. Once the complex reaches the host nucleus, it interacts with the capsid portal vertex. This portal forms a ring in which genomic DNA is translocated into the capsid. This is Tripartite terminase subunit 2 from Homo sapiens (Human).